Consider the following 203-residue polypeptide: Peptidyl-tRNA hydrolase (203 aa).

Tyrosine 18 contributes to the tRNA binding site. The active-site Proton acceptor is histidine 23. 3 residues coordinate tRNA: phenylalanine 69, asparagine 71, and asparagine 117.

This sequence belongs to the PTH family. As to quaternary structure, monomer.

The protein resides in the cytoplasm. The catalysed reaction is an N-acyl-L-alpha-aminoacyl-tRNA + H2O = an N-acyl-L-amino acid + a tRNA + H(+). In terms of biological role, hydrolyzes ribosome-free peptidyl-tRNAs (with 1 or more amino acids incorporated), which drop off the ribosome during protein synthesis, or as a result of ribosome stalling. Its function is as follows. Catalyzes the release of premature peptidyl moieties from peptidyl-tRNA molecules trapped in stalled 50S ribosomal subunits, and thus maintains levels of free tRNAs and 50S ribosomes. In Prochlorococcus marinus subsp. pastoris (strain CCMP1986 / NIES-2087 / MED4), this protein is Peptidyl-tRNA hydrolase.